A 161-amino-acid chain; its full sequence is RNA pyrophosphohydrolase (161 aa).

Residues 12–154 enclose the Nudix hydrolase domain; it reads PYRPGVGMMI…KRKLYQAVVK (143 aa). The short motif at 46-67 is the Nudix box element; sequence GGIVPGETPSIAAMREMLEEIG.

Belongs to the Nudix hydrolase family. RppH subfamily. It depends on a divalent metal cation as a cofactor.

Its function is as follows. Accelerates the degradation of transcripts by removing pyrophosphate from the 5'-end of triphosphorylated RNA, leading to a more labile monophosphorylated state that can stimulate subsequent ribonuclease cleavage. In Rickettsia peacockii (strain Rustic), this protein is RNA pyrophosphohydrolase.